Consider the following 113-residue polypeptide: T cell receptor alpha variable 8-3 (113 aa).

The signal sequence occupies residues 1–20; the sequence is MLLELIPLLGIHFVLRTARA. An Ig-like domain is found at 21 to 113; it reads QSVTQPDIHI…DAAEYFCAVG (93 aa). A disulfide bridge connects residues Cys42 and Cys110. Asn43 carries N-linked (GlcNAc...) asparagine glycosylation.

As to quaternary structure, alpha-beta TR is a heterodimer composed of an alpha and beta chain; disulfide-linked. The alpha-beta TR is associated with the transmembrane signaling CD3 coreceptor proteins to form the TR-CD3 (TcR or TCR). The assembly of alpha-beta TR heterodimers with CD3 occurs in the endoplasmic reticulum where a single alpha-beta TR heterodimer associates with one CD3D-CD3E heterodimer, one CD3G-CD3E heterodimer and one CD247 homodimer forming a stable octameric structure. CD3D-CD3E and CD3G-CD3E heterodimers preferentially associate with TR alpha and TR beta chains, respectively. The association of the CD247 homodimer is the last step of TcR assembly in the endoplasmic reticulum and is required for transport to the cell surface.

The protein localises to the cell membrane. Functionally, v region of the variable domain of T cell receptor (TR) alpha chain that participates in the antigen recognition. Alpha-beta T cell receptors are antigen specific receptors which are essential to the immune response and are present on the cell surface of T lymphocytes. Recognize peptide-major histocompatibility (MH) (pMH) complexes that are displayed by antigen presenting cells (APC), a prerequisite for efficient T cell adaptive immunity against pathogens. Binding of alpha-beta TR to pMH complex initiates TR-CD3 clustering on the cell surface and intracellular activation of LCK that phosphorylates the ITAM motifs of CD3G, CD3D, CD3E and CD247 enabling the recruitment of ZAP70. In turn ZAP70 phosphorylates LAT, which recruits numerous signaling molecules to form the LAT signalosome. The LAT signalosome propagates signal branching to three major signaling pathways, the calcium, the mitogen-activated protein kinase (MAPK) kinase and the nuclear factor NF-kappa-B (NF-kB) pathways, leading to the mobilization of transcription factors that are critical for gene expression and essential for T cell growth and differentiation. The T cell repertoire is generated in the thymus, by V-(D)-J rearrangement. This repertoire is then shaped by intrathymic selection events to generate a peripheral T cell pool of self-MH restricted, non-autoaggressive T cells. Post-thymic interaction of alpha-beta TR with the pMH complexes shapes TR structural and functional avidity. The polypeptide is T cell receptor alpha variable 8-3 (Homo sapiens (Human)).